The following is a 607-amino-acid chain: Aspartate--tRNA(Asp/Asn) ligase (607 aa).

Residue Glu-173 coordinates L-aspartate. The segment at 197–200 is aspartate; the sequence is QLFK. L-aspartate is bound at residue Arg-219. ATP contacts are provided by residues 219-221 and Gln-228; that span reads RDE. His-456 is a binding site for L-aspartate. Glu-498 contributes to the ATP binding site. L-aspartate is bound at residue Arg-505. 550–553 is a binding site for ATP; sequence GLDR.

Belongs to the class-II aminoacyl-tRNA synthetase family. Type 1 subfamily. Homodimer.

The protein resides in the cytoplasm. The catalysed reaction is tRNA(Asx) + L-aspartate + ATP = L-aspartyl-tRNA(Asx) + AMP + diphosphate. Functionally, aspartyl-tRNA synthetase with relaxed tRNA specificity since it is able to aspartylate not only its cognate tRNA(Asp) but also tRNA(Asn). Reaction proceeds in two steps: L-aspartate is first activated by ATP to form Asp-AMP and then transferred to the acceptor end of tRNA(Asp/Asn). The polypeptide is Aspartate--tRNA(Asp/Asn) ligase (Magnetococcus marinus (strain ATCC BAA-1437 / JCM 17883 / MC-1)).